The primary structure comprises 409 residues: UDP-N-acetylglucosamine--N-acetylmuramyl-(pentapeptide) pyrophosphoryl-undecaprenol N-acetylglucosamine transferase (409 aa).

UDP-N-acetyl-alpha-D-glucosamine contacts are provided by residues 11-13 (TGG), asparagine 125, arginine 169, serine 199, and glutamine 299.

It belongs to the glycosyltransferase 28 family. MurG subfamily.

The protein localises to the cell membrane. The catalysed reaction is di-trans,octa-cis-undecaprenyl diphospho-N-acetyl-alpha-D-muramoyl-L-alanyl-D-glutamyl-meso-2,6-diaminopimeloyl-D-alanyl-D-alanine + UDP-N-acetyl-alpha-D-glucosamine = di-trans,octa-cis-undecaprenyl diphospho-[N-acetyl-alpha-D-glucosaminyl-(1-&gt;4)]-N-acetyl-alpha-D-muramoyl-L-alanyl-D-glutamyl-meso-2,6-diaminopimeloyl-D-alanyl-D-alanine + UDP + H(+). It participates in cell wall biogenesis; peptidoglycan biosynthesis. Functionally, cell wall formation. Catalyzes the transfer of a GlcNAc subunit on undecaprenyl-pyrophosphoryl-MurNAc-pentapeptide (lipid intermediate I) to form undecaprenyl-pyrophosphoryl-MurNAc-(pentapeptide)GlcNAc (lipid intermediate II). In Clostridioides difficile (strain 630) (Peptoclostridium difficile), this protein is UDP-N-acetylglucosamine--N-acetylmuramyl-(pentapeptide) pyrophosphoryl-undecaprenol N-acetylglucosamine transferase.